The following is a 274-amino-acid chain: Large ribosomal subunit protein uL2cz/uL2cy (274 aa).

The tract at residues 224-274 (NPVDHPHGGGEGRAPIGRKKPATPWGYPALGRRSRKRNKYSDNLILRRRSK) is disordered.

This sequence belongs to the universal ribosomal protein uL2 family. In terms of assembly, part of the 50S ribosomal subunit.

The protein localises to the plastid. It localises to the chloroplast. The polypeptide is Large ribosomal subunit protein uL2cz/uL2cy (rpl2-A) (Carica papaya (Papaya)).